Here is a 247-residue protein sequence, read N- to C-terminus: Uridylate kinase (247 aa).

15 to 18 (KLSG) lines the ATP pocket. The segment at 23 to 28 (GDEGFG) is involved in allosteric activation by GTP. Residue Gly-57 participates in UMP binding. Positions 58 and 62 each coordinate ATP. Residues Asp-77 and 138-145 (TGNPFFTT) each bind UMP. ATP contacts are provided by Thr-165, Tyr-171, and Asp-174.

Belongs to the UMP kinase family. As to quaternary structure, homohexamer.

Its subcellular location is the cytoplasm. It catalyses the reaction UMP + ATP = UDP + ADP. Its pathway is pyrimidine metabolism; CTP biosynthesis via de novo pathway; UDP from UMP (UMPK route): step 1/1. Its activity is regulated as follows. Allosterically activated by GTP. Inhibited by UTP. Functionally, catalyzes the reversible phosphorylation of UMP to UDP. The sequence is that of Uridylate kinase from Colwellia psychrerythraea (strain 34H / ATCC BAA-681) (Vibrio psychroerythus).